The primary structure comprises 369 residues: MSHPSSIVRRVSKQIMVGNVPVGGNAPITVQSMTNTLTTDVAATVAQIKRLEAVGADMVRVSVPTMNAAEAFREIKALSNIPLIADIHFDYRIALKVAEYGVDCLRINPGNIGNERRIRSVVDCARDHNIPIRIGVNGGSLEADIQAKYGEPTAQALVDSALRHVDILDRLNFDQFKVSVKASDAQLAVESYQLLAKQINQPLHLGITEAGGLRSGSVKSAVGLGMLLSQGIGDTLRVSLAADPVEEIKVGFDILKSLRIRSRGINFIACPTCSRQEFDVIATVNALEERLEDITMPMDVSIIGCVVNGPGEALMSDLGITGGSNKSGFYEDGVRQRDRFDNNNVIDQLEAKIRARVSRTDQSNIILKV.

Residues Cys270, Cys273, Cys305, and Glu312 each contribute to the [4Fe-4S] cluster site.

Belongs to the IspG family. [4Fe-4S] cluster is required as a cofactor.

It catalyses the reaction (2E)-4-hydroxy-3-methylbut-2-enyl diphosphate + oxidized [flavodoxin] + H2O + 2 H(+) = 2-C-methyl-D-erythritol 2,4-cyclic diphosphate + reduced [flavodoxin]. The protein operates within isoprenoid biosynthesis; isopentenyl diphosphate biosynthesis via DXP pathway; isopentenyl diphosphate from 1-deoxy-D-xylulose 5-phosphate: step 5/6. Its function is as follows. Converts 2C-methyl-D-erythritol 2,4-cyclodiphosphate (ME-2,4cPP) into 1-hydroxy-2-methyl-2-(E)-butenyl 4-diphosphate. This is 4-hydroxy-3-methylbut-2-en-1-yl diphosphate synthase (flavodoxin) from Psychromonas ingrahamii (strain DSM 17664 / CCUG 51855 / 37).